We begin with the raw amino-acid sequence, 90 residues long: uncharacterized protein (90 aa).

Positions 1–20 (MAYKMLQVVLCSTLLIGALG) are cleaved as a signal peptide.

This is an uncharacterized protein from Homo sapiens (Human).